A 56-amino-acid chain; its full sequence is VPANCLLPMKVGFCRAHVPRFYYNSSSGKCEGFTYGGCGANANNFQTKAQCEKACR.

Residues 5-55 (CLLPMKVGFCRAHVPRFYYNSSSGKCEGFTYGGCGANANNFQTKAQCEKAC) form the BPTI/Kunitz inhibitor domain. Intrachain disulfides connect cysteine 5-cysteine 55, cysteine 14-cysteine 38, and cysteine 30-cysteine 51.

It belongs to the venom Kunitz-type family. Sea anemone type 2 potassium channel toxin subfamily. In terms of tissue distribution, expressed by acrorhagi.

The protein resides in the secreted. It is found in the nematocyst. Functionally, serine protease inhibitor that is strongly active against trypsin (950 IU/mg) and moderately active against plasmin. The protein is PI-actitoxin-Afv2a of Anthopleura fuscoviridis (Sea anemone).